A 122-amino-acid polypeptide reads, in one-letter code: Cytochrome c3 hydrogenase large chain (122 aa).

It depends on Fe cation as a cofactor.

It catalyses the reaction 2 Fe(III)-[cytochrome c3] + H2 = 2 Fe(II)-[cytochrome c3] + 2 H(+). This Acidithiobacillus ferrooxidans (Thiobacillus ferrooxidans) protein is Cytochrome c3 hydrogenase large chain (hoxG).